The chain runs to 366 residues: Transmembrane protein 25 (366 aa).

Positions 1–26 (MALPPGPAALRHTLLLLPALLSSGWG) are cleaved as a signal peptide. Residues 27 to 232 (ELEPQIDGQT…APGLLATRVE (206 aa)) are Extracellular-facing. An Ig-like domain is found at 30-123 (PQIDGQTWAE…SGRSANASVI (94 aa)). A disulfide bond links cysteine 52 and cysteine 107. Residues asparagine 106, asparagine 162, asparagine 175, asparagine 192, and asparagine 205 are each glycosylated (N-linked (GlcNAc...) asparagine). The chain crosses the membrane as a helical span at residues 233 to 253 (VPLLGIVVAAGLALGTLVGFS). The Cytoplasmic segment spans residues 254–366 (TLVACLVCRK…SSVSSDEIWL (113 aa)). A compositionally biased stretch (polar residues) spans 299 to 308 (PSNLQLNDLT). A disordered region spans residues 299–335 (PSNLQLNDLTPDSRAVKPADRQMAQNNSRPELLDPEP).

Interacts with GRIN2B. Expressed throughout the brain with higher levels in the pyramidal cell layer of the hippocampal CA1 and CA3 regions. Also highly expressed within the hippocampal dentate gyrus region and cerebellum and in scattered neurons in the cerebral cortex.

The protein resides in the cell membrane. It is found in the secreted. Its subcellular location is the late endosome. The protein localises to the lysosome. In neurons, modulates the degradation of NMDA receptor GRIN2B subunit. Plays a role in the regulation of neuronal excitability. The polypeptide is Transmembrane protein 25 (TMEM25) (Homo sapiens (Human)).